The chain runs to 160 residues: Protein YpjC (160 aa).

In Escherichia coli (strain K12), this protein is Protein YpjC (ypjC).